The following is a 154-amino-acid chain: 6,7-dimethyl-8-ribityllumazine synthase (154 aa).

Residues Phe23, 57–59, and 81–83 contribute to the 5-amino-6-(D-ribitylamino)uracil site; these read AYE and AVI. (2S)-2-hydroxy-3-oxobutyl phosphate is bound at residue 86-87; it reads GT. His89 functions as the Proton donor in the catalytic mechanism. Phe114 contributes to the 5-amino-6-(D-ribitylamino)uracil binding site. Arg128 is a (2S)-2-hydroxy-3-oxobutyl phosphate binding site.

The protein belongs to the DMRL synthase family. Forms an icosahedral capsid composed of 60 subunits, arranged as a dodecamer of pentamers.

The enzyme catalyses (2S)-2-hydroxy-3-oxobutyl phosphate + 5-amino-6-(D-ribitylamino)uracil = 6,7-dimethyl-8-(1-D-ribityl)lumazine + phosphate + 2 H2O + H(+). It participates in cofactor biosynthesis; riboflavin biosynthesis; riboflavin from 2-hydroxy-3-oxobutyl phosphate and 5-amino-6-(D-ribitylamino)uracil: step 1/2. Catalyzes the formation of 6,7-dimethyl-8-ribityllumazine by condensation of 5-amino-6-(D-ribitylamino)uracil with 3,4-dihydroxy-2-butanone 4-phosphate. This is the penultimate step in the biosynthesis of riboflavin. In Acidithiobacillus ferrooxidans (strain ATCC 23270 / DSM 14882 / CIP 104768 / NCIMB 8455) (Ferrobacillus ferrooxidans (strain ATCC 23270)), this protein is 6,7-dimethyl-8-ribityllumazine synthase.